A 294-amino-acid chain; its full sequence is Putative glucose-6-phosphate 1-epimerase (294 aa).

Substrate-binding residues include Arg-74 and Arg-99. His-164 is a catalytic residue. Asp-208 is a substrate binding site. Residue Glu-267 is part of the active site.

It belongs to the glucose-6-phosphate 1-epimerase family. Monomer in solution.

It catalyses the reaction alpha-D-glucose 6-phosphate = beta-D-glucose 6-phosphate. Probably functions as a hexose-6-phosphate 1-epimerase. This chain is Putative glucose-6-phosphate 1-epimerase, found in Salmonella typhimurium (strain LT2 / SGSC1412 / ATCC 700720).